Here is a 119-residue protein sequence, read N- to C-terminus: RNA guanine-N7 methyltransferase activating subunit (119 aa).

Positions 1 to 55 (MSDTSEEIPNFEEMFASRFTKDDKEYQEYLKRPPESPPIVEEWNSRAGGNQRNRG) are interaction with RNMT. Residues 30–119 (LKRPPESPPI…HNQRPPYGYY (90 aa)) are disordered. Serine 36 is subject to Phosphoserine. The RNMT-activating domain signature appears at 36–42 (SPPIVEE). Positions 47–61 (AGGNQRNRGNWLQDN) are enriched in polar residues. The segment at 56–119 (NWLQDNRQFR…HNQRPPYGYY (64 aa)) is RNA-binding. Over residues 62-73 (RQFRGRDNRRGW) the composition is skewed to basic and acidic residues. The residue at position 85 (arginine 85) is an Omega-N-methylarginine. A Phosphoserine modification is found at serine 86. Residues 89–112 (NNNYPQQRPEPYYQQQYTQYGHNQ) show a composition bias toward low complexity.

The protein belongs to the RAM family. Interacts with RNMT; this interaction enhances mRNA binding and cap methyltransferase activity.

It localises to the nucleus. Its function is as follows. Regulatory subunit of the mRNA-capping methyltransferase RNMT:RAMAC complex that methylates the N7 position of the added guanosine to the 5'-cap structure of mRNAs. Promotes the recruitment of the methyl donor, S-adenosyl-L-methionine, to RNMT. Regulates RNMT expression by a post-transcriptional stabilizing mechanism. Binds RNA. The sequence is that of RNA guanine-N7 methyltransferase activating subunit (Ramac) from Mus musculus (Mouse).